Consider the following 64-residue polypeptide: uncharacterized protein (64 aa).

This is an uncharacterized protein from Saccharomyces cerevisiae (strain ATCC 204508 / S288c) (Baker's yeast).